The sequence spans 342 residues: Farnesyl pyrophosphate synthase 2 (342 aa).

Isopentenyl diphosphate-binding residues include Lys48, Arg51, and Gln86. 2 residues coordinate Mg(2+): Asp93 and Asp97. Position 102 (Arg102) interacts with dimethylallyl diphosphate. An isopentenyl diphosphate-binding site is contributed by Arg103. 5 residues coordinate dimethylallyl diphosphate: Lys190, Thr191, Gln229, Lys246, and Lys255.

It belongs to the FPP/GGPP synthase family. Requires Mg(2+) as cofactor.

It localises to the cytoplasm. It carries out the reaction isopentenyl diphosphate + dimethylallyl diphosphate = (2E)-geranyl diphosphate + diphosphate. It catalyses the reaction isopentenyl diphosphate + (2E)-geranyl diphosphate = (2E,6E)-farnesyl diphosphate + diphosphate. It functions in the pathway isoprenoid biosynthesis; farnesyl diphosphate biosynthesis; farnesyl diphosphate from geranyl diphosphate and isopentenyl diphosphate: step 1/1. Its pathway is isoprenoid biosynthesis; geranyl diphosphate biosynthesis; geranyl diphosphate from dimethylallyl diphosphate and isopentenyl diphosphate: step 1/1. Its function is as follows. Catalyzes the sequential condensation of isopentenyl pyrophosphate with the allylic pyrophosphates, dimethylallyl pyrophosphate, and then with the resultant geranylpyrophosphate to the ultimate product farnesyl pyrophosphate. The sequence is that of Farnesyl pyrophosphate synthase 2 (FPS2) from Parthenium argentatum (Guayule rubber plant).